Reading from the N-terminus, the 178-residue chain is Large ribosomal subunit protein uL6 (178 aa).

It belongs to the universal ribosomal protein uL6 family. Part of the 50S ribosomal subunit.

Its function is as follows. This protein binds to the 23S rRNA, and is important in its secondary structure. It is located near the subunit interface in the base of the L7/L12 stalk, and near the tRNA binding site of the peptidyltransferase center. The protein is Large ribosomal subunit protein uL6 of Streptococcus agalactiae serotype Ia (strain ATCC 27591 / A909 / CDC SS700).